Reading from the N-terminus, the 273-residue chain is DnaJ homolog subfamily C member 27 (273 aa).

The tract at residues 1-18 is required for interaction with MAPK1; sequence MEANMPKRKEPGRSLRIK. Residues 23-30, 71-75, and 134-137 each bind GTP; these read GNAEVGKS, DMAGH, and NKID. One can recognise a J domain in the interval 217-273; that stretch reads GSWDMLGVKPGASRDEVNKACRKLAVLLHPDKCVAPGSEDAFKAVVNARTALLKNIK.

The protein belongs to the small GTPase superfamily. Rab family. As to quaternary structure, interacts directly with MAPK1 (wild-type and kinase-deficient forms). Interacts directly (in GTP-bound form) with MAP2K1 (wild-type and kinase-deficient forms).

The protein resides in the nucleus. GTPase which can activate the MEK/ERK pathway and induce cell transformation when overexpressed. May act as a nuclear scaffold for MAPK1, probably by association with MAPK1 nuclear export signal leading to enhanced ERK1/ERK2 signaling. In Pongo abelii (Sumatran orangutan), this protein is DnaJ homolog subfamily C member 27 (DNAJC27).